The chain runs to 142 residues: Galactose-binding lectin (142 aa).

Residues 1-141 (TYAEVESFGV…GTDIWDLLLL (141 aa)) form the Galectin domain.

As to quaternary structure, homotetramer.

Cytotoxic activity against L.infantum promastigotes is completely inhibited by D-galactose. Inhibition activity against biofilm formation by S.aureus and S.epidermidis is inhibited by alpha-lactose. Hemagglutination activity is inhibited by alpha-lactose (MIC=100 mM), beta-lactose (MIC=100 mM), lactulose (MIC=100 mM), bovine submaxillary mucin (BSM) (MIC=32 ug/ml), fetuin (MIC=16 ug/ml), porcine stomach mucin (PSM) type 2 (MIC=8 ug/ml) and PSM type 3 (MIC=8 ug/ml). In terms of biological role, galactose-binding lectin. Displays antibacterial and hemagglutinin activity. Inhibits the growth of L.infantum promastigotes by damaging their membrane integrity and inducing cell apoptosis via the production of reactive oxygen species (ROS). Inhibition of L.infantum promastigotes appears to increase with time (MIC=1.2 uM/ml after 24 hours, MIC=0.9 uM/ml after 48 hours and MIC=0.6 uM/ml after 72 hours). Agglutinates Gram-negative and Gram-positive bacteria including E.coli, S.aureus and S.epidermidis, and inhibits biofilm formation by S.aureus and S.epidermidis. Displays hemagglutination activity towards all types of human erythrocytes (O, A and B) and rabbit erythrocytes. In Chondrilla caribensis (Chicken liver sponge), this protein is Galactose-binding lectin.